We begin with the raw amino-acid sequence, 360 residues long: Ribosomal RNA large subunit methyltransferase F (360 aa).

The tract at residues 1–36 (MSKLISKQGKRPALSQSGLAKPSTSKKSSASKNANT) is disordered. A compositionally biased stretch (low complexity) spans 23-36 (STSKKSSASKNANT).

The protein belongs to the methyltransferase superfamily. METTL16/RlmF family.

The protein resides in the cytoplasm. It catalyses the reaction adenosine(1618) in 23S rRNA + S-adenosyl-L-methionine = N(6)-methyladenosine(1618) in 23S rRNA + S-adenosyl-L-homocysteine + H(+). In terms of biological role, specifically methylates the adenine in position 1618 of 23S rRNA. This Shewanella denitrificans (strain OS217 / ATCC BAA-1090 / DSM 15013) protein is Ribosomal RNA large subunit methyltransferase F.